We begin with the raw amino-acid sequence, 122 residues long: Large ribosomal subunit protein uL18 (122 aa).

It belongs to the universal ribosomal protein uL18 family. In terms of assembly, part of the 50S ribosomal subunit; part of the 5S rRNA/L5/L18/L25 subcomplex. Contacts the 5S and 23S rRNAs.

Its function is as follows. This is one of the proteins that bind and probably mediate the attachment of the 5S RNA into the large ribosomal subunit, where it forms part of the central protuberance. This chain is Large ribosomal subunit protein uL18, found in Mycobacterium leprae (strain TN).